The chain runs to 418 residues: Deubiquitinase and deneddylase Dub1 (418 aa).

Polar residues predominate over residues 1-10 (MLSPTNSTSK). The segment at 1–23 (MLSPTNSTSKKAPVPPQDSSKPV) is disordered. Residues 40–60 (TALAVLLVVVTLGLILLFYSF) traverse the membrane as a helical segment. The interval 72–143 (TRPSTKEQPT…PPLPPKAPKP (72 aa)) is disordered. Residues 86–141 (VPLPSPPLAVPRPSTPPPPVISRPSTPPAPTPAISPPSTPSAPKPSTPPPLPPKAP) show a composition bias toward pro residues. Active-site residues include His288, Asp305, and Cys358.

It belongs to the peptidase C48 family.

Its subcellular location is the secreted. The protein resides in the host cell. The protein localises to the membrane. Effector proteins function to alter host cell physiology and promote bacterial survival in host tissues. This protease possesses deubiquitinating and deneddylating activities. This chain is Deubiquitinase and deneddylase Dub1 (cdu1), found in Chlamydia trachomatis serovar D (strain ATCC VR-885 / DSM 19411 / UW-3/Cx).